Consider the following 241-residue polypeptide: Phycocyanobilin:ferredoxin oxidoreductase (241 aa).

This sequence belongs to the HY2 family.

It catalyses the reaction (2R,3Z)-phycocyanobilin + 4 oxidized [2Fe-2S]-[ferredoxin] = biliverdin IXalpha + 4 reduced [2Fe-2S]-[ferredoxin] + 4 H(+). Functionally, catalyzes the four-electron reduction of biliverdin IX-alpha (2-electron reduction at both the A and D rings); the reaction proceeds via an isolatable 2-electron intermediate, 181,182-dihydrobiliverdin. This chain is Phycocyanobilin:ferredoxin oxidoreductase, found in Prochlorococcus marinus (strain MIT 9312).